The following is a 562-amino-acid chain: MDSQVPNNNESLNRFNDIIQSLPARTRLTICSLCLLDNISTQLLRFLILNANSPNIIAVLTDQTAFLSSGETEIFQTLVKLFKQIRMIYHTRSPLLSVHDVAPGLWFPNSPPPLILRGHEAFIITAIRKANLLTFLLTSLNCLNYGFELLQSIFLDIFCPNTNTVGNNSLEQSGKFLKSQAILYLDLKTQAYIAGLKEFQDETNEISLEKKQELLDLIFPSNLADILVQRRTGDSGDITLLTPSEKDFVERCDRRRENLKIVQDFNSLTQSYEWAQFIRELLDYCNKNMGLIIWGRKGRGKSPLYDFDVNEFDPQVLFSTGTRTVEFMDDQNQPSSASAFLSTARPNHYSTHTPTTDVSSKNPAITQSIVDAAVAASMSNSSSGPHSSHNNSSNSNNNGSIGLRKPKAKRTWSKEEEEALVEGLKEVGPSWSKILDLYGPGGKITENLKNRTQVQLKDKARNWKLQYLKSGKPLPDYLIKVTGNLEKIYKAKKKFSQSPNSSTIMEQNLSQHPSSAASATEDTQTHQEDSHGQNSDNMPSNGLFGNSTSDNTGFDPHLEDGM.

The interval alanine 376–lysine 414 is disordered. Residues serine 377–serine 400 show a composition bias toward low complexity. One can recognise an HTH myb-type domain in the interval arginine 404–alanine 460. The H-T-H motif DNA-binding region spans tryptophan 431–leucine 456. Residues phenylalanine 495–methionine 562 are disordered. 2 stretches are compositionally biased toward polar residues: residues serine 496–aspartate 522 and glycine 532–threonine 552.

Homodimer.

It is found in the nucleus. It localises to the chromosome. Its subcellular location is the telomere. In terms of biological role, binds the telomeric double-stranded TTAGGG repeat and negatively regulates telomere length. Involved in the regulation of gene expression. 52 binding sites have been identified, distributed over 15 chromosomes. A member of the general regulatory factors (GRFs) which act as genome partitioners. Acts as a chromatin insulator which are known as STARs (Subtelomeric anti-silencing region). STARs prevent negative or positive transcription influence by extending across chromatin to a promoter. In Saccharomyces cerevisiae (strain ATCC 204508 / S288c) (Baker's yeast), this protein is Protein TBF1 (TBF1).